A 108-amino-acid chain; its full sequence is Large ribosomal subunit protein P1B (108 aa).

Residues 72-84 show a composition bias toward low complexity; that stretch reads AGSASGAAAGGEA. Residues 72 to 108 form a disordered region; it reads AGSASGAAAGGEAAAEEAAEEEAAEESDDDMGFGLFD. Positions 85–102 are enriched in acidic residues; it reads AAEEAAEEEAAEESDDDM.

Belongs to the eukaryotic ribosomal protein P1/P2 family. In terms of assembly, P1 and P2 exist as dimers at the large ribosomal subunit. Phosphorylated.

Plays an important role in the elongation step of protein synthesis. In Candida albicans (Yeast), this protein is Large ribosomal subunit protein P1B (RPP1B).